The chain runs to 149 residues: Large ribosomal subunit protein uL13 (149 aa).

Belongs to the universal ribosomal protein uL13 family. As to quaternary structure, part of the 50S ribosomal subunit.

In terms of biological role, this protein is one of the early assembly proteins of the 50S ribosomal subunit, although it is not seen to bind rRNA by itself. It is important during the early stages of 50S assembly. In Chlorobium limicola (strain DSM 245 / NBRC 103803 / 6330), this protein is Large ribosomal subunit protein uL13.